The primary structure comprises 476 residues: Bifunctional protein HldE (476 aa).

The interval 1-319 (MKISLPAFEK…EALSLSHGES (319 aa)) is ribokinase. An ATP-binding site is contributed by 195 to 198 (NMSE). D264 is an active-site residue. The tract at residues 345–476 (MTNGCFDILH…AIIQNIMANQ (132 aa)) is cytidylyltransferase.

It in the N-terminal section; belongs to the carbohydrate kinase PfkB family. In the C-terminal section; belongs to the cytidylyltransferase family. In terms of assembly, homodimer.

It catalyses the reaction D-glycero-beta-D-manno-heptose 7-phosphate + ATP = D-glycero-beta-D-manno-heptose 1,7-bisphosphate + ADP + H(+). The catalysed reaction is D-glycero-beta-D-manno-heptose 1-phosphate + ATP + H(+) = ADP-D-glycero-beta-D-manno-heptose + diphosphate. It functions in the pathway nucleotide-sugar biosynthesis; ADP-L-glycero-beta-D-manno-heptose biosynthesis; ADP-L-glycero-beta-D-manno-heptose from D-glycero-beta-D-manno-heptose 7-phosphate: step 1/4. It participates in nucleotide-sugar biosynthesis; ADP-L-glycero-beta-D-manno-heptose biosynthesis; ADP-L-glycero-beta-D-manno-heptose from D-glycero-beta-D-manno-heptose 7-phosphate: step 3/4. Its function is as follows. Catalyzes the phosphorylation of D-glycero-D-manno-heptose 7-phosphate at the C-1 position to selectively form D-glycero-beta-D-manno-heptose-1,7-bisphosphate. Functionally, catalyzes the ADP transfer from ATP to D-glycero-beta-D-manno-heptose 1-phosphate, yielding ADP-D-glycero-beta-D-manno-heptose. In Shewanella pealeana (strain ATCC 700345 / ANG-SQ1), this protein is Bifunctional protein HldE.